Consider the following 369-residue polypeptide: FAD-dependent monooxygenase FPY4 (369 aa).

The protein belongs to the aromatic-ring hydroxylase family. The cofactor is FAD.

It functions in the pathway secondary metabolite biosynthesis. In terms of biological role, FAD-dependent monooxygenase; part of the gene cluster that mediates the biosynthesis of the gamma-pyrones fusapyrone (FPY) and deoxyfusapyrone (dFPY). FPY is an undecaketide and thus likely synthesized by the polyketide synthase FPY1 from acetyl-CoA functioning as starter unit and the addition of 10 malonyl-CoA extender units by successive Claisen-condensations. Next to this, FPY shares some rare features: C-glycosylated 4-deoxyglucose at C-3, a gem-dimethyl group at C-13, and an alpha-beta to beta-gamma double bond shift at C-20. During FPY biosynthesis mono-C-methyl groups are transferred to the tetra-, penta-, hexa- and heptaketide, while two C-methyl groups are transferred to the nonaketide, suggesting that the CMet domain is programmed to selectively catalyze two successive C-alpha-methylation reactions of the nonaketide, while other alpha-carbons are non- or mono-methylated only. While the origin of the 4'-deoxyglucose moiety remains opaque, its transfer to C-3 is most likely mediated by the C-glycosyltransferase FPY2. Next to this, the hydroxyl group present at C-33 and discriminating between FPY and dFPY, is likely to be installed by the cytochrome P450 monooxygenase FPY7. No putative function can be predicted for the remaining genes FPY3-FPY6. The polypeptide is FAD-dependent monooxygenase FPY4 (Fusarium mangiferae (Mango malformation disease fungus)).